The sequence spans 362 residues: Outer envelope protein 39, chloroplastic (362 aa).

This sequence belongs to the OEP80 (TC 1.B.33.2) family. Expressed in germinating seeds. Expressed in the vasculature of roots, cotyledons and leaves.

The protein localises to the plastid. The protein resides in the chloroplast outer membrane. Its function is as follows. Beta-barrel pore-forming protein which possesses voltage-dependent channel activity. Required for proper plastid development. Involved in the maintenance of metabolic homeostasis of full-grown plants. In Arabidopsis thaliana (Mouse-ear cress), this protein is Outer envelope protein 39, chloroplastic.